The primary structure comprises 307 residues: Elongation factor Ts (307 aa).

An involved in Mg(2+) ion dislocation from EF-Tu region spans residues 82-85 (TDFV).

It belongs to the EF-Ts family.

It localises to the cytoplasm. Associates with the EF-Tu.GDP complex and induces the exchange of GDP to GTP. It remains bound to the aminoacyl-tRNA.EF-Tu.GTP complex up to the GTP hydrolysis stage on the ribosome. The polypeptide is Elongation factor Ts (Nautilia profundicola (strain ATCC BAA-1463 / DSM 18972 / AmH)).